A 62-amino-acid polypeptide reads, in one-letter code: Trypsin inhibitor MCI-3 (62 aa).

Belongs to the protease inhibitor I13 (potato type I serine protease inhibitor) family.

The chain is Trypsin inhibitor MCI-3 from Momordica charantia (Bitter gourd).